We begin with the raw amino-acid sequence, 363 residues long: Outer membrane protein P2 (363 aa).

The N-terminal stretch at 1-20 is a signal peptide; sequence MKKTLAALIVGAFAASAANA.

This sequence belongs to the Gram-negative porin family. As to quaternary structure, homotrimer.

It is found in the cell outer membrane. Functionally, forms pores that allow passive diffusion of small molecules across the outer membrane. This chain is Outer membrane protein P2 (ompP2), found in Haemophilus influenzae.